An 88-amino-acid polypeptide reads, in one-letter code: UPF0250 protein IL0958 (88 aa).

It belongs to the UPF0250 family.

This chain is UPF0250 protein IL0958, found in Idiomarina loihiensis (strain ATCC BAA-735 / DSM 15497 / L2-TR).